The sequence spans 176 residues: Cytochrome b (176 aa).

Helical transmembrane passes span 33–53 (FGSL…FLAM), 77–98 (WLLR…YLHV), and 113–133 (WNVG…GYVL). Heme b is bound by residues H83 and H97.

Belongs to the cytochrome b family. The cytochrome bc1 complex contains 11 subunits: 3 respiratory subunits (MT-CYB, CYC1 and UQCRFS1), 2 core proteins (UQCRC1 and UQCRC2) and 6 low-molecular weight proteins (UQCRH/QCR6, UQCRB/QCR7, UQCRQ/QCR8, UQCR10/QCR9, UQCR11/QCR10 and a cleavage product of UQCRFS1). This cytochrome bc1 complex then forms a dimer. The cofactor is heme b.

Its subcellular location is the mitochondrion inner membrane. Component of the ubiquinol-cytochrome c reductase complex (complex III or cytochrome b-c1 complex) that is part of the mitochondrial respiratory chain. The b-c1 complex mediates electron transfer from ubiquinol to cytochrome c. Contributes to the generation of a proton gradient across the mitochondrial membrane that is then used for ATP synthesis. This chain is Cytochrome b (MT-CYB), found in Tadarida brasiliensis (Brazilian free-tailed bat).